The sequence spans 538 residues: Atos homolog protein B (538 aa).

Disordered stretches follow at residues 1–103 (MRHV…GLVS), 130–149 (GSAT…PSSN), 163–185 (PDQG…QLHT), and 199–272 (KSPV…LGCP). Low complexity predominate over residues 130 to 148 (GSATSSWTSGTQSTPWPSS). A compositionally biased stretch (pro residues) spans 227–238 (HTPPGPGPPGPC). Phosphoserine is present on residues serine 254 and serine 255. Residues 348–430 (LLGNFEESLL…VPKVGTIQVT (83 aa)) form a required for macropage invasion region. The transactivation domain 1 (TAD1) stretch occupies residues 436 to 444 (QTVVKMFLV).

It belongs to the ATOS family.

The protein localises to the nucleus. In terms of biological role, transcription regulator that may syncronize transcriptional and translational programs. The protein is Atos homolog protein B of Rattus norvegicus (Rat).